The sequence spans 271 residues: Rhomboid-type serine protease 2 (271 aa).

The next 6 membrane-spanning stretches (helical) occupy residues 16–36, 64–84, 89–111, 115–137, 152–172, and 176–196; these read GLAVGLSIFLTALFLVNNLVY, HLSFFHLFFNVISTFSMIVMF, GTLYTGVILNLLAVFTAIPYCLI, LFPNVEIGGASGWFFSFLGYFAV, FSFPTLYFPVALLFVTALLAP, and LPGHAIGLLLGYFMGLKENWV. S125 (nucleophile) is an active-site residue. H179 is a catalytic residue. A disordered region spans residues 252-271; the sequence is HNTDTPAEPTFQGNGRVLGN.

It belongs to the peptidase S54 family.

It localises to the golgi apparatus membrane. The protein resides in the golgi apparatus. It is found in the cis-Golgi network membrane. The catalysed reaction is Cleaves type-1 transmembrane domains using a catalytic dyad composed of serine and histidine that are contributed by different transmembrane domains.. Probable rhomboid-type serine protease that catalyzes intramembrane proteolysis. This chain is Rhomboid-type serine protease 2 (RBD2), found in Kluyveromyces lactis (strain ATCC 8585 / CBS 2359 / DSM 70799 / NBRC 1267 / NRRL Y-1140 / WM37) (Yeast).